We begin with the raw amino-acid sequence, 145 residues long: D-aminoacyl-tRNA deacylase (145 aa).

The Gly-cisPro motif, important for rejection of L-amino acids signature appears at 137 to 138; sequence GP.

This sequence belongs to the DTD family. In terms of assembly, homodimer.

The protein resides in the cytoplasm. It carries out the reaction glycyl-tRNA(Ala) + H2O = tRNA(Ala) + glycine + H(+). It catalyses the reaction a D-aminoacyl-tRNA + H2O = a tRNA + a D-alpha-amino acid + H(+). Its function is as follows. An aminoacyl-tRNA editing enzyme that deacylates mischarged D-aminoacyl-tRNAs. Also deacylates mischarged glycyl-tRNA(Ala), protecting cells against glycine mischarging by AlaRS. Acts via tRNA-based rather than protein-based catalysis; rejects L-amino acids rather than detecting D-amino acids in the active site. By recycling D-aminoacyl-tRNA to D-amino acids and free tRNA molecules, this enzyme counteracts the toxicity associated with the formation of D-aminoacyl-tRNA entities in vivo and helps enforce protein L-homochirality. The sequence is that of D-aminoacyl-tRNA deacylase from Azotobacter vinelandii (strain DJ / ATCC BAA-1303).